Reading from the N-terminus, the 82-residue chain is MKARGSRENASKRRPSQTQYDTHLRTNQRITITRTAESHELVNQRHKIFTQSFLRTFRNQQVNKRLTKKNHLGIKKSSIVTL.

A compositionally biased stretch (basic and acidic residues) spans Met1–Ser11. Positions Met1–Arg25 are disordered. Residues Ser16–Arg25 are compositionally biased toward polar residues.

This is an uncharacterized protein from Human cytomegalovirus (strain AD169) (HHV-5).